The following is a 94-amino-acid chain: ATP synthase subunit c (94 aa).

Transmembrane regions (helical) follow at residues 15 to 35 and 61 to 81; these read VSVG…WGLI and GGLM…FIFA.

It belongs to the ATPase C chain family. F-type ATPases have 2 components, F(1) - the catalytic core - and F(0) - the membrane proton channel. F(1) has five subunits: alpha(3), beta(3), gamma(1), delta(1), epsilon(1). F(0) has three main subunits: a(1), b(2) and c(10-14). The alpha and beta chains form an alternating ring which encloses part of the gamma chain. F(1) is attached to F(0) by a central stalk formed by the gamma and epsilon chains, while a peripheral stalk is formed by the delta and b chains.

The protein resides in the cell inner membrane. Functionally, f(1)F(0) ATP synthase produces ATP from ADP in the presence of a proton or sodium gradient. F-type ATPases consist of two structural domains, F(1) containing the extramembraneous catalytic core and F(0) containing the membrane proton channel, linked together by a central stalk and a peripheral stalk. During catalysis, ATP synthesis in the catalytic domain of F(1) is coupled via a rotary mechanism of the central stalk subunits to proton translocation. In terms of biological role, key component of the F(0) channel; it plays a direct role in translocation across the membrane. A homomeric c-ring of between 10-14 subunits forms the central stalk rotor element with the F(1) delta and epsilon subunits. This is ATP synthase subunit c from Nitrosococcus oceani (strain ATCC 19707 / BCRC 17464 / JCM 30415 / NCIMB 11848 / C-107).